The following is a 406-amino-acid chain: Lysosome-associated membrane glycoprotein 1 (406 aa).

A signal peptide spans methionine 1–alanine 24. The tract at residues leucine 25–aspartate 188 is first lumenal domain. The Lumenal portion of the chain corresponds to leucine 25–asparagine 370. Asparagine 31, asparagine 52, asparagine 58, asparagine 70, asparagine 78, asparagine 97, asparagine 101, asparagine 115, asparagine 159, and asparagine 177 each carry an N-linked (GlcNAc...) asparagine glycan. A disulfide bridge links cysteine 35 with cysteine 74. Cysteine 149 and cysteine 185 are oxidised to a cystine. Residues lysine 180–asparagine 207 form a disordered region. Positions glycine 189–asparagine 218 are hinge. Pro residues predominate over residues threonine 193–proline 205. N-linked (GlcNAc...) asparagine glycans are attached at residues asparagine 214, asparagine 219, asparagine 232, and asparagine 240. A second lumenal domain region spans residues asparagine 219–asparagine 370. A disulfide bridge links cysteine 222 with cysteine 259. N-linked (GlcNAc...) (high mannose) asparagine glycosylation occurs at asparagine 252. N-linked (GlcNAc...) asparagine glycans are attached at residues asparagine 282, asparagine 296, and asparagine 311. Residues cysteine 327 and cysteine 364 are joined by a disulfide bond. A helical membrane pass occupies residues methionine 371–isoleucine 394. Topologically, residues glycine 395–isoleucine 406 are cytoplasmic.

The protein belongs to the LAMP family. Interacts with ABCB9; this interaction strongly stabilizes ABCB9 and protects ABCB9 against lysosomal degradation. Interacts with FURIN. Interacts with TMEM175; inhibiting the proton channel activity of TMEM175. O- and N-glycosylated; some of the N-glycans attached to LAMP-1 are polylactosaminoglycans.

The protein localises to the lysosome membrane. It localises to the endosome membrane. The protein resides in the late endosome membrane. It is found in the cell membrane. Its subcellular location is the cytolytic granule membrane. In terms of biological role, lysosomal membrane glycoprotein which plays an important role in lysosome biogenesis, lysosomal pH regulation, autophagy and cholesterol homeostasis. Acts as an important regulator of lysosomal lumen pH regulation by acting as a direct inhibitor of the proton channel TMEM175, facilitating lysosomal acidification for optimal hydrolase activity. Also plays an important role in NK-cells cytotoxicity. Mechanistically, participates in cytotoxic granule movement to the cell surface and perforin trafficking to the lytic granule. In addition, protects NK-cells from degranulation-associated damage induced by their own cytotoxic granule content. Presents carbohydrate ligands to selectins. Also implicated in tumor cell metastasis. The protein is Lysosome-associated membrane glycoprotein 1 (Lamp1) of Mus musculus (Mouse).